The sequence spans 1818 residues: Integrin beta-4 (1818 aa).

A signal peptide spans 1–28; it reads MAGPCCSPWVKLLLLAAMLSASLPGDLA. Over 29 to 712 the chain is Extracellular; it reads NRCKKAQVKS…HKKKDCPPGS (684 aa). A PSI domain is found at 30–74; sequence RCKKAQVKSCTECIRVDKSCAYCTDELFKERRCNTQAELLAAGCR. 8 cysteine pairs are disulfide-bonded: cysteine 31–cysteine 49, cysteine 39–cysteine 457, cysteine 42–cysteine 62, cysteine 52–cysteine 73, cysteine 246–cysteine 289, cysteine 459–cysteine 478, cysteine 470–cysteine 481, and cysteine 483–cysteine 492. Positions 132 to 310 constitute a VWFA domain; sequence DLYILMDFSN…KTQDYPSVPT (179 aa). Mg(2+) is bound by residues serine 140 and serine 142. The Ca(2+) site is built by serine 142, aspartate 145, aspartate 146, and aspartate 177. Positions 195-200 are involved in NRG1- and IGF1-binding; it reads WPNSDP. The Ca(2+) site is built by asparagine 229, aspartate 231, proline 233, and glutamate 234. A Mg(2+)-binding site is contributed by glutamate 234. Asparagine 328 carries N-linked (GlcNAc...) asparagine glycosylation. Glutamate 351 is a binding site for Ca(2+). I-EGF domains are found at residues 459 to 493, 494 to 539, 540 to 576, and 577 to 617; these read CELQKEVRSARCHFRGDFMCGHCVCNEGWSGKTCN, CSTG…HFCE, YDNFQCPRTSGFLCNDRGRCSMGECVCEPGWTGRSCD, and CPLS…TTCE. The short motif at 473–475 is the Cell attachment site element; it reads RGD. A glycan (N-linked (GlcNAc...) asparagine) is linked at asparagine 493. 11 cysteine pairs are disulfide-bonded: cysteine 494–cysteine 522, cysteine 505–cysteine 520, cysteine 514–cysteine 525, cysteine 527–cysteine 538, cysteine 545–cysteine 559, cysteine 553–cysteine 564, cysteine 566–cysteine 575, cysteine 577–cysteine 600, cysteine 584–cysteine 598, cysteine 592–cysteine 603, and cysteine 605–cysteine 616. Residue asparagine 581 is glycosylated (N-linked (GlcNAc...) asparagine). Asparagine 619 carries N-linked (GlcNAc...) asparagine glycosylation. Intrachain disulfides connect cysteine 628–cysteine 673, cysteine 634–cysteine 653, cysteine 637–cysteine 650, and cysteine 682–cysteine 708. N-linked (GlcNAc...) asparagine glycosylation is present at asparagine 697. The chain crosses the membrane as a helical span at residues 713 to 733; sequence FWWLIPLLIFLLLLLALLLLL. The tract at residues 734-751 is palmitoylated on several cysteines; the sequence is CWKYCACCKACLGLLPCC. Topologically, residues 734-1818 are cytoplasmic; the sequence is CWKYCACCKA…THMDQQFFQT (1085 aa). Serine 773 is modified (phosphoserine). One can recognise a Calx-beta domain in the interval 981–1086; the sequence is VNITIIKEQA…QVRRFQVQLS (106 aa). A Cell attachment site motif is present at residues 1005–1007; the sequence is RGD. Residues serine 1071 and serine 1121 each carry the phosphoserine modification. The tract at residues 1115–1137 is disordered; that stretch reads INQTLSSPPPPHGDLGAPQNPNA. Fibronectin type-III domains follow at residues 1131-1220 and 1224-1323; these read APQN…THQE and EPGR…TQPK. Residues 1402–1433 are disordered; that stretch reads LSASSGRSDEDGSVAGGVEGEGSGWIRGATPR. The span at 1415–1426 shows a compositional bias: gly residues; sequence VAGGVEGEGSGW. Phosphoserine occurs at positions 1451, 1454, and 1470. The residue at position 1483 (threonine 1483) is a Phosphothreonine. Serine 1490 bears the Phosphoserine mark. The residue at position 1526 (threonine 1526) is a Phosphothreonine. Fibronectin type-III domains lie at 1526–1621 and 1639–1735; these read TPTR…VHPQ and APGP…SQVG. At serine 1787 the chain carries Phosphoserine.

Belongs to the integrin beta chain family. Heterodimer of an alpha and a beta subunit. Beta-4 associates with alpha-6. Interacts (via cytoplasmic region) with COL17A1 (via cytoplasmic region). Interacts (via cytoplasmic region) with DST isoform 3 (via N-terminus). Interacts (via cytoplasmic domain) with DST (via N-terminus). Interacts with RAC1. ITGA6:ITGB4 is found in a ternary complex with NRG1 and ERBB3. ITGA6:ITGB4 is found in a ternary complex with IGF1 and IGF1R. ITGA6:ITGB4 interacts with IGF2. Interacts with TMEM268; this interaction prevents ITGB4 degradation. Palmitoylated by DHHC3 at several cysteines of the membrane-proximal region, enhancing stability and cell surface expression. Palmitoylation also promotes secondary association with tertaspanins.

It is found in the cell membrane. The protein localises to the cell junction. It localises to the hemidesmosome. Its function is as follows. Integrin alpha-6/beta-4 is a receptor for laminin. It plays a critical structural role in the hemidesmosome of epithelial cells. Is required for the regulation of keratinocyte polarity and motility. ITGA6:ITGB4 binds to NRG1 (via EGF domain) and this binding is essential for NRG1-ERBB signaling. ITGA6:ITGB4 binds to IGF1 and this binding is essential for IGF1 signaling. ITGA6:ITGB4 binds to IGF2 and this binding is essential for IGF2 signaling. The polypeptide is Integrin beta-4 (Itgb4) (Mus musculus (Mouse)).